A 283-amino-acid chain; its full sequence is Thymidylate synthase (283 aa).

Arg22 contributes to the dUMP binding site. Catalysis depends on Cys160, which acts as the Nucleophile. DUMP contacts are provided by residues 180-183 (RSCD), Asn191, and 221-223 (HIY). Residue Asp183 participates in (6R)-5,10-methylene-5,6,7,8-tetrahydrofolate binding. A (6R)-5,10-methylene-5,6,7,8-tetrahydrofolate-binding site is contributed by Ser282.

Belongs to the thymidylate synthase family. Bacterial-type ThyA subfamily. As to quaternary structure, homodimer.

It is found in the cytoplasm. The enzyme catalyses dUMP + (6R)-5,10-methylene-5,6,7,8-tetrahydrofolate = 7,8-dihydrofolate + dTMP. It participates in pyrimidine metabolism; dTTP biosynthesis. In terms of biological role, catalyzes the reductive methylation of 2'-deoxyuridine-5'-monophosphate (dUMP) to 2'-deoxythymidine-5'-monophosphate (dTMP) while utilizing 5,10-methylenetetrahydrofolate (mTHF) as the methyl donor and reductant in the reaction, yielding dihydrofolate (DHF) as a by-product. This enzymatic reaction provides an intracellular de novo source of dTMP, an essential precursor for DNA biosynthesis. The polypeptide is Thymidylate synthase (Photobacterium profundum (strain SS9)).